The chain runs to 182 residues: Crossover junction endodeoxyribonuclease RuvC (182 aa).

Active-site residues include D7, E69, and D141. Mg(2+)-binding residues include D7, E69, and D141.

The protein belongs to the RuvC family. In terms of assembly, homodimer which binds Holliday junction (HJ) DNA. The HJ becomes 2-fold symmetrical on binding to RuvC with unstacked arms; it has a different conformation from HJ DNA in complex with RuvA. In the full resolvosome a probable DNA-RuvA(4)-RuvB(12)-RuvC(2) complex forms which resolves the HJ. Mg(2+) is required as a cofactor.

It localises to the cytoplasm. The catalysed reaction is Endonucleolytic cleavage at a junction such as a reciprocal single-stranded crossover between two homologous DNA duplexes (Holliday junction).. Functionally, the RuvA-RuvB-RuvC complex processes Holliday junction (HJ) DNA during genetic recombination and DNA repair. Endonuclease that resolves HJ intermediates. Cleaves cruciform DNA by making single-stranded nicks across the HJ at symmetrical positions within the homologous arms, yielding a 5'-phosphate and a 3'-hydroxyl group; requires a central core of homology in the junction. The consensus cleavage sequence is 5'-(A/T)TT(C/G)-3'. Cleavage occurs on the 3'-side of the TT dinucleotide at the point of strand exchange. HJ branch migration catalyzed by RuvA-RuvB allows RuvC to scan DNA until it finds its consensus sequence, where it cleaves and resolves the cruciform DNA. In Paracidovorax citrulli (strain AAC00-1) (Acidovorax citrulli), this protein is Crossover junction endodeoxyribonuclease RuvC.